The chain runs to 180 residues: Lysine-specific demethylase 5C (180 aa).

The segment at 116 to 159 (PEESLAYSSDAGEGAGHIPKVQGLLENGDSVTSPEKVATEEGSG) is disordered. Serine 148 is modified (phosphoserine).

The protein belongs to the JARID1 histone demethylase family. Part of two distinct complexes, one containing E2F6, and the other containing REST. Interacts with ZMYND8. Requires Fe(2+) as cofactor.

The protein localises to the nucleus. It carries out the reaction N(6),N(6),N(6)-trimethyl-L-lysyl(4)-[histone H3] + 3 2-oxoglutarate + 3 O2 = L-lysyl(4)-[histone H3] + 3 formaldehyde + 3 succinate + 3 CO2. Functionally, histone demethylase that specifically demethylates 'Lys-4' of histone H3, thereby playing a central role in histone code. Does not demethylate histone H3 'Lys-9', H3 'Lys-27', H3 'Lys-36', H3 'Lys-79' or H4 'Lys-20'. Demethylates trimethylated and dimethylated but not monomethylated H3 'Lys-4'. Participates in transcriptional repression of neuronal genes by recruiting histone deacetylases and REST at neuron-restrictive silencer elements. Represses the CLOCK-BMAL1 heterodimer-mediated transcriptional activation of the core clock component PER2. This chain is Lysine-specific demethylase 5C (KDM5C), found in Cricetulus griseus (Chinese hamster).